The chain runs to 337 residues: DNA-directed RNA polymerase subunit alpha (337 aa).

Residues 1–233 (MIQKNWQELI…DQLSIFVNFE (233 aa)) form an alpha N-terminal domain (alpha-NTD) region. The segment at 249–337 (FNPVLLKKVD…DLAKRYEDQY (89 aa)) is alpha C-terminal domain (alpha-CTD).

The protein belongs to the RNA polymerase alpha chain family. Homodimer. The RNAP catalytic core consists of 2 alpha, 1 beta, 1 beta' and 1 omega subunit. When a sigma factor is associated with the core the holoenzyme is formed, which can initiate transcription.

The catalysed reaction is RNA(n) + a ribonucleoside 5'-triphosphate = RNA(n+1) + diphosphate. In terms of biological role, DNA-dependent RNA polymerase catalyzes the transcription of DNA into RNA using the four ribonucleoside triphosphates as substrates. The sequence is that of DNA-directed RNA polymerase subunit alpha from Brucella canis (strain ATCC 23365 / NCTC 10854 / RM-666).